The sequence spans 582 residues: 5-aminolevulinate synthase, erythroid-specific, mitochondrial (582 aa).

R158 serves as a coordination point for succinyl-CoA. 2 residues coordinate pyridoxal 5'-phosphate: C253 and F254. Positions 275 and 294 each coordinate succinyl-CoA. Pyridoxal 5'-phosphate contacts are provided by S327, H355, and T383. The active site involves K386. K386 is subject to N6-(pyridoxal phosphate)lysine. Residues T415 and T416 each coordinate pyridoxal 5'-phosphate. T503 contributes to the succinyl-CoA binding site.

Belongs to the class-II pyridoxal-phosphate-dependent aminotransferase family. As to quaternary structure, homodimer. Pyridoxal 5'-phosphate serves as cofactor.

Its subcellular location is the mitochondrion inner membrane. It catalyses the reaction succinyl-CoA + glycine + H(+) = 5-aminolevulinate + CO2 + CoA. It functions in the pathway porphyrin-containing compound metabolism; protoporphyrin-IX biosynthesis; 5-aminolevulinate from glycine: step 1/1. Its function is as follows. Catalyzes the pyridoxal 5'-phosphate (PLP)-dependent condensation of succinyl-CoA and glycine to form aminolevulinic acid (ALA), with CoA and CO2 as by-products. Contributes significantly to heme formation during erythropoiesis. The protein is 5-aminolevulinate synthase, erythroid-specific, mitochondrial (alas2) of Opsanus tau (Oyster toadfish).